Consider the following 225-residue polypeptide: Ribose-5-phosphate isomerase A (225 aa).

Substrate-binding positions include 26-29, 82-85, and 95-98; these read TGST, DGAD, and KGGG. Glu-104 (proton acceptor) is an active-site residue. Lys-122 lines the substrate pocket.

Belongs to the ribose 5-phosphate isomerase family. As to quaternary structure, homodimer.

The enzyme catalyses aldehydo-D-ribose 5-phosphate = D-ribulose 5-phosphate. It functions in the pathway carbohydrate degradation; pentose phosphate pathway; D-ribose 5-phosphate from D-ribulose 5-phosphate (non-oxidative stage): step 1/1. Its function is as follows. Catalyzes the reversible conversion of ribose-5-phosphate to ribulose 5-phosphate. This is Ribose-5-phosphate isomerase A from Streptococcus gordonii (strain Challis / ATCC 35105 / BCRC 15272 / CH1 / DL1 / V288).